The sequence spans 418 residues: Putative ion-transport protein YfeO (418 aa).

Transmembrane regions (helical) follow at residues 10–30 (LLLS…LIVV), 54–74 (DSPL…GLVI), 99–119 (ALPG…SLGP), 120–140 (EHPI…RLLP), 149–169 (ILAS…AALI), 186–206 (LFAP…FFHP), 223–243 (ILSG…AVWC), 258–278 (VLVL…GGPV), 300–320 (DYFL…ASGF), 322–342 (GGRI…LHEH), 343–363 (VPAV…VLVV), and 371–391 (LFMA…CIVM).

Belongs to the chloride channel (TC 2.A.49) family.

It localises to the cell membrane. The protein is Putative ion-transport protein YfeO of Escherichia coli O139:H28 (strain E24377A / ETEC).